A 664-amino-acid polypeptide reads, in one-letter code: Phosphomethylpyrimidine synthase (664 aa).

2 stretches are compositionally biased toward polar residues: residues 1 to 10 (MSTEPLSINP) and 17 to 27 (SATQEPSTSSK). Residues 1-37 (MSTEPLSINPLSAKPLSATQEPSTSSKPSRREQRAAA) are disordered. Residues Asn261, Met290, Tyr319, His355, 375–377 (SRG), 416–419 (DGLR), and Glu455 contribute to the substrate site. His459 is a Zn(2+) binding site. Tyr482 contributes to the substrate binding site. His523 contributes to the Zn(2+) binding site. [4Fe-4S] cluster-binding residues include Cys603, Cys606, and Cys611.

This sequence belongs to the ThiC family. As to quaternary structure, homodimer. The cofactor is [4Fe-4S] cluster.

It catalyses the reaction 5-amino-1-(5-phospho-beta-D-ribosyl)imidazole + S-adenosyl-L-methionine = 4-amino-2-methyl-5-(phosphooxymethyl)pyrimidine + CO + 5'-deoxyadenosine + formate + L-methionine + 3 H(+). Its pathway is cofactor biosynthesis; thiamine diphosphate biosynthesis. Catalyzes the synthesis of the hydroxymethylpyrimidine phosphate (HMP-P) moiety of thiamine from aminoimidazole ribotide (AIR) in a radical S-adenosyl-L-methionine (SAM)-dependent reaction. This Pectobacterium atrosepticum (strain SCRI 1043 / ATCC BAA-672) (Erwinia carotovora subsp. atroseptica) protein is Phosphomethylpyrimidine synthase.